The following is a 385-amino-acid chain: Podocin (385 aa).

Basic and acidic residues predominate over residues 1–27 (MDSRARSSSREAHGRSSRSSSRDDKKA). Residues 1–64 (MDSRARSSSR…GEPRAPAATA (64 aa)) form a disordered region. Residues 1–104 (MDSRARSSSR…IKPSGLGACE (104 aa)) lie on the Cytoplasmic side of the membrane. A lipid anchor (S-palmitoyl cysteine) is attached at Cys-103. Residues 105–125 (WLLVLASLIFIIMTFPFSIWF) traverse the membrane as a helical segment. Residues 126–385 (CIKVVQEYER…NPKKKDSPML (260 aa)) are Extracellular-facing. The segment covering 357-370 (NRAQGSINYPSSSK) has biased composition (polar residues). Residues 357–385 (NRAQGSINYPSSSKPVEPLNPKKKDSPML) are disordered. Basic and acidic residues predominate over residues 376 to 385 (NPKKKDSPML).

The protein belongs to the band 7/mec-2 family. In terms of assembly, interacts with nephrin/NPHS1, KIRRL1 and CD2AP. Interacts with DDN.

The protein resides in the membrane. In terms of biological role, plays a role in the regulation of glomerular permeability, acting probably as a linker between the plasma membrane and the cytoskeleton. This is Podocin (Nphs2) from Mus musculus (Mouse).